Consider the following 249-residue polypeptide: MIVKYGGNAMKSLDLRRAVARELGTLRGAMPLVVVHGGGPVIERELAARGVASEFIGGLRVTTPEAMDVVEMALCQLNKQLSQDIGQAVGLMGRDDELLRAEVLDPQLGRVGRVTGVNAGLLRTLLGAGLTPVVGCVAVGEDGEALNVNADTVAGAVAGALGEGAVFLTDVDGVYRAYPDPDSRAAQLTRAEVEDGLAAGWIAGGMIPKVRAALDALGRGAPFAIIASGMTAGVLAQAARGEAGTRIVP.

Substrate contacts are provided by residues 38 to 39 (GG), arginine 60, and asparagine 147.

It belongs to the acetylglutamate kinase family. ArgB subfamily.

It is found in the cytoplasm. The catalysed reaction is N-acetyl-L-glutamate + ATP = N-acetyl-L-glutamyl 5-phosphate + ADP. Its pathway is amino-acid biosynthesis; L-arginine biosynthesis; N(2)-acetyl-L-ornithine from L-glutamate: step 2/4. Catalyzes the ATP-dependent phosphorylation of N-acetyl-L-glutamate. The polypeptide is Acetylglutamate kinase (Deinococcus radiodurans (strain ATCC 13939 / DSM 20539 / JCM 16871 / CCUG 27074 / LMG 4051 / NBRC 15346 / NCIMB 9279 / VKM B-1422 / R1)).